The primary structure comprises 239 residues: Ribonuclease PH (239 aa).

Residues R86 and G124–R126 each bind phosphate.

It belongs to the RNase PH family. As to quaternary structure, homohexameric ring arranged as a trimer of dimers.

It carries out the reaction tRNA(n+1) + phosphate = tRNA(n) + a ribonucleoside 5'-diphosphate. Phosphorolytic 3'-5' exoribonuclease that plays an important role in tRNA 3'-end maturation. Removes nucleotide residues following the 3'-CCA terminus of tRNAs; can also add nucleotides to the ends of RNA molecules by using nucleoside diphosphates as substrates, but this may not be physiologically important. Probably plays a role in initiation of 16S rRNA degradation (leading to ribosome degradation) during starvation. The chain is Ribonuclease PH from Psychromonas ingrahamii (strain DSM 17664 / CCUG 51855 / 37).